Reading from the N-terminus, the 94-residue chain is MEEVPRRQPGGLVEAEGVFQVYEDWECWDYVSQRVPDERLQRWLAMLTNNQLRRQVIREAQIWIWKHKGAAVRRNCGCRLCNPGWGSQVRNVEL.

It is found in the virion. The protein localises to the host nucleus. Its function is as follows. Seems to function as a Vpr-like protein, since it mediates host cell cycle arrest in G2 phase. Cell cycle arrest creates a favorable environment for maximizing viral expression and production. The protein is Probable Vpr-like protein (tat) of Ovis aries (Sheep).